The chain runs to 521 residues: Type-2 serine--tRNA ligase (521 aa).

Residue Ala-316 coordinates L-serine. Cys-318 is a Zn(2+) binding site. Residue Arg-347 coordinates L-serine. ATP is bound by residues Arg-347–Glu-349 and Arg-358–Val-359. An L-serine-binding site is contributed by Arg-364–Glu-366. Positions 366 and 473 each coordinate Zn(2+). Arg-480 is an ATP binding site.

This sequence belongs to the class-II aminoacyl-tRNA synthetase family. Type-2 seryl-tRNA synthetase subfamily. In terms of assembly, homodimer. Zn(2+) is required as a cofactor.

It localises to the cytoplasm. It catalyses the reaction tRNA(Ser) + L-serine + ATP = L-seryl-tRNA(Ser) + AMP + diphosphate + H(+). The enzyme catalyses tRNA(Sec) + L-serine + ATP = L-seryl-tRNA(Sec) + AMP + diphosphate + H(+). It participates in aminoacyl-tRNA biosynthesis; selenocysteinyl-tRNA(Sec) biosynthesis; L-seryl-tRNA(Sec) from L-serine and tRNA(Sec): step 1/1. Functionally, catalyzes the attachment of serine to tRNA(Ser). Is also able to aminoacylate tRNA(Sec) with serine, to form the misacylated tRNA L-seryl-tRNA(Sec), which will be further converted into selenocysteinyl-tRNA(Sec). The chain is Type-2 serine--tRNA ligase (serS) from Methanocaldococcus jannaschii (strain ATCC 43067 / DSM 2661 / JAL-1 / JCM 10045 / NBRC 100440) (Methanococcus jannaschii).